The primary structure comprises 310 residues: uncharacterized protein (310 aa).

This is an uncharacterized protein from Archaeoglobus fulgidus (strain ATCC 49558 / DSM 4304 / JCM 9628 / NBRC 100126 / VC-16).